A 76-amino-acid polypeptide reads, in one-letter code: Alpha/kappa-conotoxin-like pl14.1 (76 aa).

The N-terminal stretch at 1–27 (MPSVRSVTCCCLLWMMLSVQLVTPGSP) is a signal peptide. The propeptide occupies 28 to 39 (ATAQLSGQRTAR). 2 disulfides stabilise this stretch: cysteine 46/cysteine 61 and cysteine 50/cysteine 63. Asparagine amide is present on asparagine 64. Residues 65 to 76 (GKRDVVSSSMAV) constitute a propeptide that is removed on maturation.

This sequence belongs to the conotoxin J superfamily. Expressed by the venom duct.

The protein localises to the secreted. Its function is as follows. Highly inhibits both nicotinic acetylcholine receptors (neuronal (alpha-3/beta-4) and muscular (alpha-1/beta-1/epsilon/delta) subtypes) and the voltage-gated potassium channel Kv1.6/KCNA6 subtype. The polypeptide is Alpha/kappa-conotoxin-like pl14.1 (Conus planorbis (Planorbis cone)).